A 508-amino-acid polypeptide reads, in one-letter code: Protein disulfide-isomerase (508 aa).

The signal sequence occupies residues 1-17 (MLRRALLCLAVAALVRA). The 117-residue stretch at 18–134 (DAPEEEDHVL…IVNWLKKRTG (117 aa)) folds into the Thioredoxin 1 domain. Active-site nucleophile residues include Cys53 and Cys56. Cys53 and Cys56 are disulfide-bonded. At Lys200 the chain carries N6-acetyllysine. N6-succinyllysine occurs at positions 222 and 271. Ser331 bears the Phosphoserine mark. The Thioredoxin 2 domain occupies 349-475 (GKIKPHLMSQ…FKKFLESGGQ (127 aa)). The residue at position 357 (Ser357) is a Phosphoserine; by FAM20C. Active-site nucleophile residues include Cys397 and Cys400. A disulfide bridge connects residues Cys397 and Cys400. A Phosphoserine modification is found at Ser427. The interval 471–508 (ESGGQDGAGDDDDLEDLEEAEEPDMEEDDDQKAVKDEL) is disordered. The span at 478 to 500 (AGDDDDLEDLEEAEEPDMEEDDD) shows a compositional bias: acidic residues. The short motif at 505–508 (KDEL) is the Prevents secretion from ER element.

Belongs to the protein disulfide isomerase family. As to quaternary structure, heterodimer; heterodimerizes with the protein microsomal triglyceride transfer MTTP. Homodimer. Monomers and homotetramers may also occur. Interacts with P4HA2, forming a heterotetramer consisting of 2 alpha subunits (P4HA2) and 2 beta (P4HB), where P4HB plays the role of a structural subunit; this tetramer catalyzes the formation of 4-hydroxyproline in collagen. Also constitutes the structural subunit of the microsomal triacylglycerol transfer protein MTTP in mammalian cells. Stabilizes both enzymes and retain them in the ER without contributing to the catalytic activity. Binds UBQLN1. Interacts with ERO1B. Binds to CD4, and upon HIV-1 binding to the cell membrane, is part of a P4HB/PDI-CD4-CXCR4-gp120 complex. Interacts with ILDR2. Interacts with ERN1/IRE1A (via N-terminus); the interaction is enhanced by phosphorylation of P4HB by FAM20C in response to endoplasmic reticulum stress and results in attenuation of ERN1 activity. In terms of processing, phosphorylation of Ser-357 by FAM20C is induced by endoplasmic reticulum stress and results in a functional switch from oxidoreductase to molecular chaperone. It also promotes interaction with ERN1.

Its subcellular location is the endoplasmic reticulum. The protein resides in the endoplasmic reticulum lumen. It is found in the melanosome. It localises to the cell membrane. It catalyses the reaction Catalyzes the rearrangement of -S-S- bonds in proteins.. In terms of biological role, this multifunctional protein catalyzes the formation, breakage and rearrangement of disulfide bonds. At the cell surface, seems to act as a reductase that cleaves disulfide bonds of proteins attached to the cell. May therefore cause structural modifications of exofacial proteins. Inside the cell, seems to form/rearrange disulfide bonds of nascent proteins. At high concentrations and following phosphorylation by FAM20C, functions as a chaperone that inhibits aggregation of misfolded proteins. At low concentrations, facilitates aggregation (anti-chaperone activity). May be involved with other chaperones in the structural modification of the TG precursor in hormone biogenesis. Also acts as a structural subunit of various enzymes such as prolyl 4-hydroxylase and microsomal triacylglycerol transfer protein MTTP. Receptor for LGALS9; the interaction retains P4HB at the cell surface of Th2 T helper cells, increasing disulfide reductase activity at the plasma membrane, altering the plasma membrane redox state and enhancing cell migration. The chain is Protein disulfide-isomerase (P4HB) from Homo sapiens (Human).